The following is a 178-amino-acid chain: Nucleoplasmin-3 (178 aa).

Position 2 is an N-acetylalanine (alanine 2). Phosphoserine occurs at positions 13 and 16. Arginine 27 is subject to Omega-N-methylarginine. Residues 141–178 (TMSNDVSEEESEEEEEDSDEEEVELCPILPAKKQGGRP) are disordered. The span at 146 to 164 (VSEEESEEEEEDSDEEEVE) shows a compositional bias: acidic residues. 3 positions are modified to phosphoserine: serine 147, serine 151, and serine 158.

Belongs to the nucleoplasmin family. In terms of assembly, interacts with NPM (via N-terminus). Forms a pentamer with NPM at a ratio 4:1 (NPM3/NPM). Two pentamers form a decamer. In terms of processing, phosphorylated. As to expression, ubiquitous.

It localises to the nucleus. Its subcellular location is the nucleolus. Its function is as follows. Plays a role in the regulation of diverse cellular processes such as ribosome biogenesis, chromatin remodeling or protein chaperoning. Modulates the histone chaperone function and the RNA-binding activity of nucleolar phosphoprotein B23/NPM. Efficiently mediates chromatin remodeling when included in a pentamer containing NPM3 and NPM. The protein is Nucleoplasmin-3 (NPM3) of Homo sapiens (Human).